A 179-amino-acid polypeptide reads, in one-letter code: DELTA-actitoxin-Afr1c (179 aa).

An N-terminal alpha-helix that contributes to the pore region spans residues Ser-1–Val-29. Residues Gly-11 to Ser-30 form an N-terminal region region. Residue Arg-31 coordinates an N-(acyl)-sphingosylphosphocholine. Positions 51 and 53 each coordinate N-acetyl-D-glucosamine 6-sulfate. An N-(acyl)-sphingosylphosphocholine-binding residues include Arg-53, Ser-54, Arg-79, Gly-85, Tyr-113, Ser-114, Trp-116, Tyr-133, Tyr-137, Tyr-138, Arg-144, and Gly-168. The tract at residues Ser-105–Lys-120 is trp-rich region, which is important for the binding to lipid membrane. Position 138 (Tyr-138) interacts with N-acetyl-D-glucosamine 6-sulfate. The Cell attachment site, crucial for protein stability signature appears at Arg-144–Asp-146.

Belongs to the actinoporin family. Sea anemone subfamily. As to quaternary structure, octamer or nonamer in membranes. Monomer in the soluble state.

The protein localises to the secreted. Its subcellular location is the nematocyst. It localises to the target cell membrane. Functionally, pore-forming toxin (PFT) that consists of a crown-shaped octamer or nonamer that forms cation-selective hydrophilic pores of about 1.5 nm (inside) and 13 nm (outside) and causes cytolysis. It causes cardiac stimulation. Also causes hemolysis (HC(50)=0.3 nM). Interestingly, the Phe-16 is crucial for hemolysis. Pore formation is a multi-step process that involves specific recognition of membrane sphingomyelin (but neither cholesterol nor phosphatidylcholine) using aromatic rich region and adjacent phosphocholine (POC) binding site, firm binding to the membrane (mainly driven by hydrophobic interactions) accompanied by the transfer of the N-terminal region to the lipid-water interface and finally pore formation after oligomerization of monomers. It is probable that a dimeric form is an assembly intermediate before the complete oligomerization. The formation of stable pores occurs only in vesicles composed of DOPC/SM (there is no oligomerization when the PFT is treated with vesicles of DOPC or SM alone). The transmembrane pore displays 8 lateral perforations, one at each subunit-subunit interface, partially occupied by the acyl-chain region of a bridging lipid. Each pore contains 24 lipid molecules, firmly bound to each subunit, that is, 3 lipids (L1, L2, L3, L4 and/or L5) are associated to each subunit. Lipid L1 bridges 2 subunits, whereas lipids L2 and L3 bind to sites at single subunit. This is DELTA-actitoxin-Afr1c from Actinia fragacea (Strawberry anemone).